The chain runs to 428 residues: Ribulose bisphosphate carboxylase (428 aa).

Lys151 acts as the Proton acceptor in catalysis. Lys153 is a substrate binding site. Residues Lys177, Asp179, and Glu180 each contribute to the Mg(2+) site. Position 177 is an N6-carboxylysine (Lys177). His270 functions as the Proton acceptor in the catalytic mechanism. Residues Arg271, His303, 354–356 (SGG), and 376–379 (QFGG) contribute to the substrate site.

This sequence belongs to the RuBisCO large chain family. Type III subfamily. Homodimer or homodecamer. In contrast to form I RuBisCO, the form III RuBisCO is composed solely of large subunits. Requires Mg(2+) as cofactor.

It catalyses the reaction 2 (2R)-3-phosphoglycerate + 2 H(+) = D-ribulose 1,5-bisphosphate + CO2 + H2O. The catalysed reaction is D-ribulose 1,5-bisphosphate + O2 = 2-phosphoglycolate + (2R)-3-phosphoglycerate + 2 H(+). Its function is as follows. Catalyzes the addition of molecular CO(2) and H(2)O to ribulose 1,5-bisphosphate (RuBP), generating two molecules of 3-phosphoglycerate (3-PGA). Functions in an archaeal AMP degradation pathway, together with AMP phosphorylase and R15P isomerase. The polypeptide is Ribulose bisphosphate carboxylase (Methanosarcina barkeri (strain Fusaro / DSM 804)).